The chain runs to 141 residues: 3-hydroxyacyl-[acyl-carrier-protein] dehydratase FabZ (141 aa).

The active site involves histidine 47.

Belongs to the thioester dehydratase family. FabZ subfamily.

The protein localises to the cytoplasm. The enzyme catalyses a (3R)-hydroxyacyl-[ACP] = a (2E)-enoyl-[ACP] + H2O. Its function is as follows. Involved in unsaturated fatty acids biosynthesis. Catalyzes the dehydration of short chain beta-hydroxyacyl-ACPs and long chain saturated and unsaturated beta-hydroxyacyl-ACPs. The protein is 3-hydroxyacyl-[acyl-carrier-protein] dehydratase FabZ of Caldanaerobacter subterraneus subsp. tengcongensis (strain DSM 15242 / JCM 11007 / NBRC 100824 / MB4) (Thermoanaerobacter tengcongensis).